The sequence spans 328 residues: L-lactate dehydrogenase (328 aa).

NAD(+)-binding positions include Val18, Glu39, Lys46, Tyr71, and 85–86 (GA). Substrate-binding residues include Gln88 and Arg94. Residues Ser107, 124–126 (AAN), and Ser149 each bind NAD(+). Position 126–129 (126–129 (NPVD)) interacts with substrate. Residue 154–157 (DSAR) participates in substrate binding. Positions 159 and 174 each coordinate beta-D-fructose 1,6-bisphosphate. The active-site Proton acceptor is the His181. Tyr226 is subject to Phosphotyrosine. Thr235 is a substrate binding site.

The protein belongs to the LDH/MDH superfamily. LDH family. As to quaternary structure, homotetramer.

Its subcellular location is the cytoplasm. The catalysed reaction is (S)-lactate + NAD(+) = pyruvate + NADH + H(+). It participates in fermentation; pyruvate fermentation to lactate; (S)-lactate from pyruvate: step 1/1. Its activity is regulated as follows. Allosterically activated by fructose 1,6-bisphosphate (FBP). Functionally, catalyzes the conversion of lactate to pyruvate. This chain is L-lactate dehydrogenase, found in Streptococcus sanguinis (strain SK36).